Reading from the N-terminus, the 101-residue chain is Protein S100-A4 (101 aa).

Residue Ala-2 is modified to N-acetylalanine. Lys-7 carries the N6-acetyllysine modification. EF-hand domains are found at residues 12–47 (MVSTFHKYSGKEGDKFKLNKSELKELLTRELPSFLG) and 50–85 (TDEAAFQKLMSNLDSNRDNEVDFQEYCVFLSCIAMM). Ca(2+) is bound by residues Lys-28 and Glu-33. Lys-35 carries the post-translational modification N6-acetyllysine. Residues Asp-63, Asn-65, Asp-67, Glu-69, and Glu-74 each contribute to the Ca(2+) site.

It belongs to the S-100 family. As to quaternary structure, homodimer. Interacts with PPFIBP1 in a calcium-dependent mode. Interacts with PGLYRP1; this complex acts as a chemoattractant that promotes lymphocyte movement. Interacts with MYH9; this interaction increases cell motility. Interacts with Annexin 2/ANXA2. Interacts with TP53; this interaction promotes TP53 degradation. Interacts with CCR5. Interacts with FCGR3A; this interaction inhibits PKC-dependent phosphorylation of FCGR3A. As to expression, ubiquitously expressed.

The protein localises to the secreted. It localises to the nucleus. Its subcellular location is the cytoplasm. In terms of biological role, calcium-binding protein that plays a role in various cellular processes including motility, angiogenesis, cell differentiation, apoptosis, and autophagy. Increases cell motility and invasiveness by interacting with non-muscle myosin heavy chain (NMMHC) IIA/MYH9. Mechanistically, promotes filament depolymerization and increases the amount of soluble myosin-IIA, resulting in the formation of stable protrusions facilitating chemotaxis. Also modulates the pro-apoptotic function of TP53 by binding to its C-terminal transactivation domain within the nucleus and reducing its protein levels. Within the extracellular space, stimulates cytokine production including granulocyte colony-stimulating factor and CCL24 from T-lymphocytes. In addition, stimulates T-lymphocyte chemotaxis by acting as a chemoattractant complex with PGLYRP1 that promotes lymphocyte migration via CCR5 and CXCR3 receptors. The chain is Protein S100-A4 (S100A4) from Homo sapiens (Human).